The primary structure comprises 179 residues: SCAN domain-containing protein 1 (179 aa).

Residues 1-108 (MAATEPILAA…GSRLGPETFR (108 aa)) are disordered. Low complexity predominate over residues 60–80 (AIPTPQAAASAAPELPLGPAP). In terms of domain architecture, SCAN box spans 108–166 (RQRFRQFRYQDAAGPREAFRQLRELSRQWLRPDIRTKEQIVEMLVQEQLLAILPEAARA).

In terms of assembly, interacts with ZNF202.

It is found in the nucleus. May regulate transcriptional activity. The protein is SCAN domain-containing protein 1 (SCAND1) of Pongo pygmaeus (Bornean orangutan).